We begin with the raw amino-acid sequence, 119 residues long: Circadian clock oscillator protein KaiB (119 aa).

The protein belongs to the KaiB family. In terms of assembly, may undergo a major conformational rearrangment; in the free state forms homooligomers. When bound to KaiC switches to a monomeric thioredoxin-fold (KaiB(fs)). The active oscillator complex is probably KaiC(6):KaiB(6).

Functionally, component of the KaiBC clock protein complex, which constitutes the main circadian regulator in cyanobacteria; it may modify the ATPase activity of KaiC. Its function is as follows. May be a metamorphic protein which reversibly switches between an inactive tetrameric fold and a rare, thioredoxin-like monomeric fold (KaiB(fs)). KaiB(fs) binds phospho-KaiC, and perhaps clock output effectors. The protein is Circadian clock oscillator protein KaiB of Prochlorococcus marinus (strain MIT 9303).